Reading from the N-terminus, the 1131-residue chain is Chitin synthase 1 (1131 aa).

A compositionally biased stretch (basic and acidic residues) spans 1–20; sequence MSDQNNRSRNEYHSNRKNEP. The segment at 1–22 is disordered; sequence MSDQNNRSRNEYHSNRKNEPSY. Phosphoserine occurs at positions 34, 35, 270, 299, and 318. The tract at residues 282 to 305 is disordered; the sequence is YLHDDSRPVNDGKEELDSVKSGYS. Residue T328 is modified to Phosphothreonine. S358 bears the Phosphoserine mark. A run of 7 helical transmembrane segments spans residues 795-815, 833-853, 866-886, 914-934, 942-962, 1042-1062, and 1101-1121; these read FFYL…FFLV, VLSV…FILS, VLTC…SIFM, IVIS…IYLQ, FIQY…YAFC, LVII…LETG, and ILWL…IYMI.

The protein belongs to the chitin synthase family.

Its subcellular location is the cell membrane. The enzyme catalyses [(1-&gt;4)-N-acetyl-beta-D-glucosaminyl](n) + UDP-N-acetyl-alpha-D-glucosamine = [(1-&gt;4)-N-acetyl-beta-D-glucosaminyl](n+1) + UDP + H(+). Its activity is regulated as follows. Requires proteolytic activation. Functionally, polymerizes chitin, a structural polymer of the cell wall and septum, by transferring the sugar moiety of UDP-GlcNAc to the non-reducing end of the growing chitin polymer. Required for mitotic division septum formation during adverse conditions. The polypeptide is Chitin synthase 1 (CHS1) (Saccharomyces cerevisiae (strain ATCC 204508 / S288c) (Baker's yeast)).